The primary structure comprises 204 residues: Small ribosomal subunit protein uS7 (204 aa).

Met-1 is modified (N-acetylmethionine). Position 2 is an N-acetylthreonine; in 40S ribosomal protein S5, N-terminally processed (Thr-2). The residue at position 14 (Thr-14) is a Phosphothreonine. Lys-47 is subject to N6-acetyllysine; alternate. Lys-47 participates in a covalent cross-link: Glycyl lysine isopeptide (Lys-Gly) (interchain with G-Cter in SUMO2); alternate. Residue Ser-142 is modified to Phosphoserine.

The protein belongs to the universal ribosomal protein uS7 family. In terms of assembly, component of the small ribosomal subunit. Part of the small subunit (SSU) processome, composed of more than 70 proteins and the RNA chaperone small nucleolar RNA (snoRNA) U3.

It is found in the cytoplasm. The protein localises to the nucleus. Its subcellular location is the nucleolus. Functionally, component of the small ribosomal subunit. The ribosome is a large ribonucleoprotein complex responsible for the synthesis of proteins in the cell. Part of the small subunit (SSU) processome, first precursor of the small eukaryotic ribosomal subunit. During the assembly of the SSU processome in the nucleolus, many ribosome biogenesis factors, an RNA chaperone and ribosomal proteins associate with the nascent pre-rRNA and work in concert to generate RNA folding, modifications, rearrangements and cleavage as well as targeted degradation of pre-ribosomal RNA by the RNA exosome. In Mus musculus (Mouse), this protein is Small ribosomal subunit protein uS7 (Rps5).